The chain runs to 1072 residues: MMSFGSADALLGAPFAPLHGGGSLHYALSRKAGAGGTRSAAGSSSGFHSWARTSVSSVSASPSRFRGAASSTDSLDTLSNGPEGCVAAVAARSEKEQLQALNDRFAGYIDKVRQLEAHNRTLEGEAAALRQQKGRAAMGELYEREVREMRGAVLRLGAARGHVRLEQEHLLEDIAHVRQRLDEEARQREEAEAAARALARFAQEAEAARVELQKKAQALQEECGYLRRHHQEEVGELLGQIQGCGAAQAQAQAEARDALKCDVTSALREIRAQLEGHTVQSTLQSEEWFRVRLDRLSEAAKVNTDAMRSAQEEITEYRRQLQARTTELEALKSTKESLERQRSELEDRHQVDMASYQDAIQQLDNELRNTKWEMAAQLREYQDLLNVKMALDIEIAAYRKLLEGEECRIGFGPSPFSLTEGLPKIPSMSTHIKVKSEEKIKVVEKSEKETVIVEEQTEEIQVTEEVTEEEDKEAQGEEEEEAEEGGEEAATTSPPAEEAASPEKETKSPVKEEAKSPAEAKSPAEAKSPAEAKSPAEVKSPAEVKSPAEAKSPAEAKSPAEVKSPAEVKSPAEAKSPAEAKSPAEVKSPATVKSPGEAKSPAEAKSPAEVKSPVEAKSPAEAKSPASVKSPGEAKSPAEAKSPAEVKSPATVKSPVEAKSPAEVKSPVTVKSPAEAKSPVEVKSPASVKSPSEAKSPAGAKSPAEAKSPVVAKSPAEAKSPAEAKPPAEAKSPAEAKSPAEAKSPAEAKSPAEAKSPVEVKSPEKAKSPVKEGAKSLAEAKSPEKAKSPVKEEIKPPAEVKSPEKAKSPMKEEAKSPEKAKTLDVKSPEAKTPAKEEAKRPADIRSPEQVKSPAKEEAKSPEKEETRTEKVAPKKEEVKSPVEEVKAKEPPKKVEEEKTPATPKTEVKESKKDEAPKEAQKPKAEEKEPLTEKPKDSPGEAKKEEAKEKKAAAPEEETPAKLGVKEEAKPKEKAEDAKAKEPSKPSEKEKPKKEEVPAAPEKKDTKEEKTTESKKPEEKPKMEAKAKEEDKGLPQEPSKPKTEKAEKSSSTDQKDSQPSEKAPEDKAAKGDK.

Position 74 is a phosphoserine (serine 74). The IF rod domain maps to 94–409 (EKEQLQALND…KLLEGEECRI (316 aa)). Coiled coils occupy residues 98–132 (LQAL…LRQQ), 174–222 (IAHV…LQEE), and 293–380 (LDRL…QLRE). The segment at 278-643 (TVQSTLQSEE…AKSPAEAKSP (366 aa)) is 55 X 6 AA approximate tandem repeats of K-S-P-[VAGSE]-[KEVTSGA]-[EAVK]. Serine 343, serine 414, and serine 417 each carry phosphoserine. Residues 454–1072 (EEQTEEIQVT…PEDKAAKGDK (619 aa)) form a disordered region. Residues 455-487 (EQTEEIQVTEEVTEEEDKEAQGEEEEEAEEGGE) show a composition bias toward acidic residues. The span at 488–499 (EAATTSPPAEEA) shows a compositional bias: low complexity. Position 501 is a phosphoserine (serine 501). Residues 501 to 584 (SPEKETKSPV…KSPAEAKSPA (84 aa)) show a composition bias toward basic and acidic residues. 36 consecutive repeat copies span residues 507 to 512 (KSPVKE), 515 to 520 (KSPAEA), 521 to 526 (KSPAEA), 527 to 532 (KSPAEA), 533 to 538 (KSPAEV), 539 to 544 (KSPAEV), 545 to 550 (KSPAEA), 551 to 556 (KSPAEA), 557 to 562 (KSPAEV), 563 to 568 (KSPAEV), 569 to 574 (KSPAEA), 575 to 580 (KSPAEA), 581 to 586 (KSPAEV), 587 to 592 (KSPATV), 593 to 598 (KSPGEA), 599 to 604 (KSPAEA), 605 to 610 (KSPAEV), 611 to 616 (KSPVEA), 617 to 622 (KSPAEA), 623 to 628 (KSPASV), 629 to 634 (KSPGEA), 635 to 640 (KSPAEA), 641 to 646 (KSPAEV), 647 to 652 (KSPATV), 653 to 658 (KSPVEA), 659 to 664 (KSPAEV), 665 to 670 (KSPVTV), 671 to 676 (KSPAEA), 677 to 682 (KSPVEV), 683 to 688 (KSPASV), 689 to 694 (KSPSEA), 695 to 700 (KSPAGA), 701 to 706 (KSPAEA), 707 to 712 (KSPVVA), 713 to 718 (KSPAEA), and 719 to 724 (KSPAEA). A phosphoserine mark is found at serine 516, serine 522, serine 528, serine 534, serine 540, serine 546, serine 552, serine 558, serine 564, serine 570, serine 576, serine 582, serine 588, serine 594, serine 600, serine 606, serine 612, serine 618, serine 624, serine 627, serine 630, serine 636, serine 642, serine 648, serine 654, serine 660, serine 666, serine 672, serine 678, serine 684, serine 687, serine 690, serine 696, serine 702, serine 708, serine 714, and serine 720. Residues 600–620 (SPAEAKSPAEVKSPVEAKSPA) show a composition bias toward basic and acidic residues. A compositionally biased stretch (low complexity) spans 621–631 (EAKSPASVKSP). The span at 720-774 (SPAEAKPPAEAKSPAEAKSPAEAKSPAEAKSPAEAKSPVEVKSPEKAKSPVKEGA) shows a compositional bias: basic and acidic residues. A 37; approximate repeat occupies 725-730 (KPPAEA). Tandem repeats lie at residues 731–736 (KSPAEA), 737–742 (KSPAEA), 743–748 (KSPAEA), 749–754 (KSPAEA), 755–760 (KSPVEV), 761–766 (KSPEKA), and 767–772 (KSPVKE). A phosphoserine mark is found at serine 732, serine 738, serine 744, serine 750, serine 756, and serine 762. One copy of the 45; approximate repeat lies at 775 to 780 (KSLAEA). Phosphoserine is present on residues serine 776, serine 782, and serine 788. A run of 2 repeats spans residues 781 to 786 (KSPEKA) and 787 to 792 (KSPVKE). 2 stretches are compositionally biased toward basic and acidic residues: residues 781–953 (KSPE…KAAA) and 963–1072 (GVKE…KGDK). A 48; approximate repeat occupies 795–800 (KPPAEV). Repeat copies occupy residues 801-806 (KSPEKA), 807-812 (KSPMKE), 815-820 (KSPEKA), and 826-831 (KSPEAK). Phosphoserine occurs at positions 802, 808, 816, and 827. At threonine 832 the chain carries Phosphothreonine. 5 positions are modified to phosphoserine: serine 846, serine 852, serine 860, serine 880, and serine 937. Repeat copies occupy residues 851-856 (KSPAKE), 859-864 (KSPEKE), and 879-884 (KSPVEE).

The protein belongs to the intermediate filament family. As to quaternary structure, forms heterodimers with NEFL; which can further hetero-oligomerize (in vitro). Forms heterodimers with INA (in vitro). Post-translationally, there are a number of repeats of the tripeptide K-S-P, NFH is phosphorylated on a number of the serines in this motif. It is thought that phosphorylation of NFH results in the formation of interfilament cross bridges that are important in the maintenance of axonal caliber. Phosphorylation seems to play a major role in the functioning of the larger neurofilament polypeptides (NF-M and NF-H), the levels of phosphorylation being altered developmentally and coincidentally with a change in the neurofilament function. In terms of processing, phosphorylated in the head and rod regions by the PKC kinase PKN1, leading to the inhibition of polymerization. In terms of tissue distribution, expressed in the dorsal root ganglion neurons (at protein level). Expressed in cutaneous and muscular sensory neurons.

The protein localises to the cytoplasm. It is found in the cytoskeleton. The protein resides in the cell projection. Its subcellular location is the axon. Its function is as follows. Neurofilaments usually contain three intermediate filament proteins: NEFL, NEFM, and NEFH which are involved in the maintenance of neuronal caliber. NEFH has an important function in mature axons that is not subserved by the two smaller NEF proteins. May additionally cooperate with the neuronal intermediate filament proteins PRPH and INA to form neuronal filamentous networks. This Rattus norvegicus (Rat) protein is Neurofilament heavy polypeptide (Nefh).